We begin with the raw amino-acid sequence, 344 residues long: GTPase Obg (344 aa).

Residues 1-159 (MKFLDEAKVY…MWLILRLKLI (159 aa)) enclose the Obg domain. The OBG-type G domain maps to 160–327 (ADAGLVGLPN…ALRAIQAQLD (168 aa)). Residues 166–173 (GLPNAGKS), 191–195 (FTTLH), 212–215 (DIPG), 279–282 (SKAD), and 308–310 (SAA) each bind GTP. Residues serine 173 and threonine 193 each coordinate Mg(2+).

It belongs to the TRAFAC class OBG-HflX-like GTPase superfamily. OBG GTPase family. In terms of assembly, monomer. Mg(2+) is required as a cofactor.

The protein localises to the cytoplasm. Its function is as follows. An essential GTPase which binds GTP, GDP and possibly (p)ppGpp with moderate affinity, with high nucleotide exchange rates and a fairly low GTP hydrolysis rate. Plays a role in control of the cell cycle, stress response, ribosome biogenesis and in those bacteria that undergo differentiation, in morphogenesis control. This is GTPase Obg from Methylorubrum extorquens (strain CM4 / NCIMB 13688) (Methylobacterium extorquens).